A 184-amino-acid polypeptide reads, in one-letter code: Large ribosomal subunit protein uL6 (184 aa).

Belongs to the universal ribosomal protein uL6 family. In terms of assembly, part of the 50S ribosomal subunit.

In terms of biological role, this protein binds to the 23S rRNA, and is important in its secondary structure. It is located near the subunit interface in the base of the L7/L12 stalk, and near the tRNA binding site of the peptidyltransferase center. The polypeptide is Large ribosomal subunit protein uL6 (Thermotoga maritima (strain ATCC 43589 / DSM 3109 / JCM 10099 / NBRC 100826 / MSB8)).